Reading from the N-terminus, the 553-residue chain is Fusion glycoprotein F0 (553 aa).

Residues 1 to 31 (MGSRSSTRIPVPLMLTVRVMLALSCVCPTSA) form the signal peptide. Residues 32–500 (LDGRPLAAAG…VNVKLTSTSA (469 aa)) lie on the Extracellular side of the membrane. Cystine bridges form between Cys76–Cys199, Cys362–Cys370, Cys394–Cys399, and Cys401–Cys424. Asn85 carries N-linked (GlcNAc...) asparagine; by host glycosylation. The segment at 117-141 (LIGAIIGGVALGVATAAQITAASAL) is fusion peptide. A coiled-coil region spans residues 142 to 170 (IQANQNAANILLLKESIAATNEAVHEVTN). Asn191 and Asn366 each carry an N-linked (GlcNAc...) asparagine; by host glycan. N-linked (GlcNAc...) asparagine; by host glycans are attached at residues Asn447 and Asn471. A coiled-coil region spans residues 466-491 (ELGNVNNSISNALDKLEESNSKLDKV). Residues 501 to 521 (LITYIVLTVISLVCGILSLVL) form a helical membrane-spanning segment. Residues 522–553 (ACYLMYKQKAQQKTLLWLGNNTLDQMRATTKM) lie on the Cytoplasmic side of the membrane. Cys523 carries S-palmitoyl cysteine; by host lipidation.

The protein belongs to the paramyxoviruses fusion glycoprotein family. Homotrimer of disulfide-linked F1-F2. The inactive precursor F0 is glycosylated and proteolytically cleaved into F1 and F2 to be functionally active. The cleavage is mediated by cellular proteases during the transport and maturation of the polypeptide.

The protein localises to the virion membrane. Its subcellular location is the host cell membrane. Functionally, class I viral fusion protein. Under the current model, the protein has at least 3 conformational states: pre-fusion native state, pre-hairpin intermediate state, and post-fusion hairpin state. During viral and plasma cell membrane fusion, the heptad repeat (HR) regions assume a trimer-of-hairpins structure, positioning the fusion peptide in close proximity to the C-terminal region of the ectodomain. The formation of this structure appears to drive apposition and subsequent fusion of viral and plasma cell membranes. Directs fusion of viral and cellular membranes leading to delivery of the nucleocapsid into the cytoplasm. This fusion is pH independent and occurs directly at the outer cell membrane. The trimer of F1-F2 (F protein) probably interacts with HN at the virion surface. Upon HN binding to its cellular receptor, the hydrophobic fusion peptide is unmasked and interacts with the cellular membrane, inducing the fusion between cell and virion membranes. Later in infection, F proteins expressed at the plasma membrane of infected cells could mediate fusion with adjacent cells to form syncytia, a cytopathic effect that could lead to tissue necrosis. In Newcastle disease virus (strain Queensland/66) (NDV), this protein is Fusion glycoprotein F0 (F).